A 432-amino-acid polypeptide reads, in one-letter code: 23S rRNA (uracil(1939)-C(5))-methyltransferase RlmD (432 aa).

One can recognise a TRAM domain in the interval 10–68; it reads RVTTREIITVTTDGLDAFGQGVARHHGKALFIAGLLPGERAEVVLSEDKKQFARGDVKK. The [4Fe-4S] cluster site is built by cysteine 81, cysteine 87, cysteine 90, and cysteine 162. Positions 265, 294, 299, 315, 342, and 363 each coordinate S-adenosyl-L-methionine. Residue cysteine 389 is the Nucleophile of the active site.

It belongs to the class I-like SAM-binding methyltransferase superfamily. RNA M5U methyltransferase family. RlmD subfamily.

It carries out the reaction uridine(1939) in 23S rRNA + S-adenosyl-L-methionine = 5-methyluridine(1939) in 23S rRNA + S-adenosyl-L-homocysteine + H(+). In terms of biological role, catalyzes the formation of 5-methyl-uridine at position 1939 (m5U1939) in 23S rRNA. This Cronobacter sakazakii (strain ATCC BAA-894) (Enterobacter sakazakii) protein is 23S rRNA (uracil(1939)-C(5))-methyltransferase RlmD.